Here is a 357-residue protein sequence, read N- to C-terminus: Phosphoribosylformylglycinamidine cyclo-ligase (357 aa).

The protein belongs to the AIR synthase family.

The protein localises to the cytoplasm. The enzyme catalyses 2-formamido-N(1)-(5-O-phospho-beta-D-ribosyl)acetamidine + ATP = 5-amino-1-(5-phospho-beta-D-ribosyl)imidazole + ADP + phosphate + H(+). It participates in purine metabolism; IMP biosynthesis via de novo pathway; 5-amino-1-(5-phospho-D-ribosyl)imidazole from N(2)-formyl-N(1)-(5-phospho-D-ribosyl)glycinamide: step 2/2. The polypeptide is Phosphoribosylformylglycinamidine cyclo-ligase (Allorhizobium ampelinum (strain ATCC BAA-846 / DSM 112012 / S4) (Agrobacterium vitis (strain S4))).